The following is a 447-amino-acid chain: Phosphoglucosamine mutase (447 aa).

The active-site Phosphoserine intermediate is serine 104. Mg(2+) is bound by residues serine 104, aspartate 243, aspartate 245, and aspartate 247. Serine 104 carries the phosphoserine modification.

This sequence belongs to the phosphohexose mutase family. Mg(2+) is required as a cofactor. Post-translationally, activated by phosphorylation.

The catalysed reaction is alpha-D-glucosamine 1-phosphate = D-glucosamine 6-phosphate. In terms of biological role, catalyzes the conversion of glucosamine-6-phosphate to glucosamine-1-phosphate. This Corynebacterium glutamicum (strain R) protein is Phosphoglucosamine mutase.